Here is a 332-residue protein sequence, read N- to C-terminus: D-alanine--D-alanine ligase (332 aa).

The ATP-grasp domain maps to 112-312 (KRIWRADGLP…YPDLCLRILA (201 aa)). Residue 138–193 (FQELGAPMIVKPSREGSTIGLTKVTSLGQCEQAYRLAAQHDPEVLCEQFIDGDETT) coordinates ATP. Residues Asp265, Glu279, and Asn281 each coordinate Mg(2+).

The protein belongs to the D-alanine--D-alanine ligase family. Requires Mg(2+) as cofactor. The cofactor is Mn(2+).

Its subcellular location is the cytoplasm. It catalyses the reaction 2 D-alanine + ATP = D-alanyl-D-alanine + ADP + phosphate + H(+). Its pathway is cell wall biogenesis; peptidoglycan biosynthesis. In terms of biological role, cell wall formation. The protein is D-alanine--D-alanine ligase of Acidovorax ebreus (strain TPSY) (Diaphorobacter sp. (strain TPSY)).